A 350-amino-acid polypeptide reads, in one-letter code: Ferrochelatase (350 aa).

The Fe cation site is built by His-220 and Glu-301.

Belongs to the ferrochelatase family.

The protein resides in the cytoplasm. It catalyses the reaction heme b + 2 H(+) = protoporphyrin IX + Fe(2+). The protein operates within porphyrin-containing compound metabolism; protoheme biosynthesis; protoheme from protoporphyrin-IX: step 1/1. Catalyzes the ferrous insertion into protoporphyrin IX. This Brucella anthropi (strain ATCC 49188 / DSM 6882 / CCUG 24695 / JCM 21032 / LMG 3331 / NBRC 15819 / NCTC 12168 / Alc 37) (Ochrobactrum anthropi) protein is Ferrochelatase.